The primary structure comprises 110 residues: UPF0102 protein HH_1751 (110 aa).

The protein belongs to the UPF0102 family.

The protein is UPF0102 protein HH_1751 of Helicobacter hepaticus (strain ATCC 51449 / 3B1).